Consider the following 85-residue polypeptide: Sodium channel neurotoxin MeuNaTxalpha-2 (85 aa).

Residues 1–19 (MNYLVMISLALLLMTGVES) form the signal peptide. Residues 21–83 (RDAYIANDRN…VPIRIPGECR (63 aa)) form the LCN-type CS-alpha/beta domain. Cystine bridges form between Cys-31–Cys-82, Cys-35–Cys-55, Cys-41–Cys-65, and Cys-45–Cys-67. Position 83 is an arginine amide (Arg-83).

The protein belongs to the long (4 C-C) scorpion toxin superfamily. Sodium channel inhibitor family. Alpha subfamily. In terms of tissue distribution, expressed by the venom gland.

The protein resides in the secreted. Alpha toxins bind voltage-independently at site-3 of sodium channels (Nav) and inhibit the inactivation of the activated channels, thereby blocking neuronal transmission. This toxin inhibits inactivation of Nav1.4/SCN4A (EC(50)=2.23 uM) and drosophila DmNav1 (EC(50)=220 nM). The toxin (1 uM) does not significantly shift the midpoint of activation at the two channels, but induces a significant depolarizing shift in the V(1/2) of inactivation of the channels. In addition, the toxin accelerates the recovery from fast inactivation in Nav1.4/SCN4A and DmNav1. It also shows antimicrobial activity. The protein is Sodium channel neurotoxin MeuNaTxalpha-2 of Mesobuthus eupeus (Lesser Asian scorpion).